Reading from the N-terminus, the 1342-residue chain is DNA-directed RNA polymerase subunit beta (1342 aa).

The protein belongs to the RNA polymerase beta chain family. As to quaternary structure, the RNAP catalytic core consists of 2 alpha, 1 beta, 1 beta' and 1 omega subunit. When a sigma factor is associated with the core the holoenzyme is formed, which can initiate transcription.

It carries out the reaction RNA(n) + a ribonucleoside 5'-triphosphate = RNA(n+1) + diphosphate. Its function is as follows. DNA-dependent RNA polymerase catalyzes the transcription of DNA into RNA using the four ribonucleoside triphosphates as substrates. The sequence is that of DNA-directed RNA polymerase subunit beta from Glaesserella parasuis serovar 5 (strain SH0165) (Haemophilus parasuis).